Consider the following 156-residue polypeptide: Transcriptional repressor NrdR (156 aa).

A zinc finger spans residues 3–34 (CPFCGNIDTQVKDSRPAEDHVSIRRRRFCPAC). The ATP-cone domain maps to 49–139 (LVVIKTSGKR…VYKNFQAADD (91 aa)).

The protein belongs to the NrdR family. Zn(2+) serves as cofactor.

Its function is as follows. Negatively regulates transcription of bacterial ribonucleotide reductase nrd genes and operons by binding to NrdR-boxes. This chain is Transcriptional repressor NrdR, found in Ruegeria pomeroyi (strain ATCC 700808 / DSM 15171 / DSS-3) (Silicibacter pomeroyi).